A 184-amino-acid polypeptide reads, in one-letter code: UPF0149 protein PSPA7_5968 (184 aa).

Belongs to the UPF0149 family.

This is UPF0149 protein PSPA7_5968 from Pseudomonas paraeruginosa (strain DSM 24068 / PA7) (Pseudomonas aeruginosa (strain PA7)).